Here is a 193-residue protein sequence, read N- to C-terminus: Recombination protein RecR (193 aa).

The C4-type zinc-finger motif lies at Cys61–Cys76. A Toprim domain is found at Ser84–Pro170.

The protein belongs to the RecR family.

Its function is as follows. May play a role in DNA repair. It seems to be involved in an RecBC-independent recombinational process of DNA repair. It may act with RecF and RecO. The sequence is that of Recombination protein RecR from Helicobacter pylori (strain G27).